The sequence spans 153 residues: D-aminoacyl-tRNA deacylase (153 aa).

The short motif at 137 to 138 (GP) is the Gly-cisPro motif, important for rejection of L-amino acids element.

It belongs to the DTD family. As to quaternary structure, homodimer.

Its subcellular location is the cytoplasm. The catalysed reaction is glycyl-tRNA(Ala) + H2O = tRNA(Ala) + glycine + H(+). The enzyme catalyses a D-aminoacyl-tRNA + H2O = a tRNA + a D-alpha-amino acid + H(+). Functionally, an aminoacyl-tRNA editing enzyme that deacylates mischarged D-aminoacyl-tRNAs. Also deacylates mischarged glycyl-tRNA(Ala), protecting cells against glycine mischarging by AlaRS. Acts via tRNA-based rather than protein-based catalysis; rejects L-amino acids rather than detecting D-amino acids in the active site. By recycling D-aminoacyl-tRNA to D-amino acids and free tRNA molecules, this enzyme counteracts the toxicity associated with the formation of D-aminoacyl-tRNA entities in vivo and helps enforce protein L-homochirality. The protein is D-aminoacyl-tRNA deacylase of Methylococcus capsulatus (strain ATCC 33009 / NCIMB 11132 / Bath).